The following is a 444-amino-acid chain: Jacalin-related lectin 11 (444 aa).

Ala-2 carries the N-acetylalanine modification. Jacalin-type lectin domains are found at residues 2–143 (ALKV…YFIK), 146–290 (SIQS…YYAP), and 298–442 (PEKL…HVTA).

Belongs to the jacalin lectin family.

This chain is Jacalin-related lectin 11 (JAL11), found in Arabidopsis thaliana (Mouse-ear cress).